Consider the following 372-residue polypeptide: N-methyl-L-tryptophan oxidase (372 aa).

4-34 (DLIIIGSGSVGAAAGYYATRAGLKVLMTDAH) provides a ligand contact to FAD. An S-8alpha-FAD cysteine modification is found at Cys-307.

Belongs to the MSOX/MTOX family. MTOX subfamily. As to quaternary structure, monomer. It depends on FAD as a cofactor.

It catalyses the reaction N(alpha)-methyl-L-tryptophan + O2 + H2O = L-tryptophan + formaldehyde + H2O2. In terms of biological role, catalyzes the oxidative demethylation of N-methyl-L-tryptophan. This chain is N-methyl-L-tryptophan oxidase, found in Citrobacter koseri (strain ATCC BAA-895 / CDC 4225-83 / SGSC4696).